The sequence spans 647 residues: DNA mismatch repair protein MutL (647 aa).

It belongs to the DNA mismatch repair MutL/HexB family.

In terms of biological role, this protein is involved in the repair of mismatches in DNA. It is required for dam-dependent methyl-directed DNA mismatch repair. May act as a 'molecular matchmaker', a protein that promotes the formation of a stable complex between two or more DNA-binding proteins in an ATP-dependent manner without itself being part of a final effector complex. This Bacillus cereus (strain ATCC 10987 / NRS 248) protein is DNA mismatch repair protein MutL.